The following is a 355-amino-acid chain: MSRFRKTLVSAFVLCLVIFPLLVSAAEEENQCGGSKGGSAAEKASALKYKIIAFFSILIAGVFGVCLPIFGLKTESNFFMYVKAFAAGVILATGFVHILPDATESLTSSCLGEEPPWGDFPMTGLVAMAASILTMLIESFASGYLNRSRLAKEGKTLPVSTGGEEEHAHTGSAHTHASQGHSHGSLLIPQDDDHIDMRKKIVTQILELGIVVHSVIIGISLGASPSVSTIKPLIAAITFHQLFEGFGLGGCISEAKFRVKKIWVMLMFFALTAPIGIGIGIGVAEIYNENSPMALKVSGFLNATASGILIYMALVDLVAPLFMNQKTQSSMKIQVACSVSLVVGAGLMSLLAIWA.

A signal peptide spans 1 to 25 (MSRFRKTLVSAFVLCLVIFPLLVSA). Topologically, residues 26-50 (AEEENQCGGSKGGSAAEKASALKYK) are extracellular. A helical membrane pass occupies residues 51 to 71 (IIAFFSILIAGVFGVCLPIFG). Residues 72 to 77 (LKTESN) lie on the Cytoplasmic side of the membrane. The chain crosses the membrane as a helical span at residues 78–98 (FFMYVKAFAAGVILATGFVHI). Topologically, residues 99-116 (LPDATESLTSSCLGEEPP) are extracellular. A helical transmembrane segment spans residues 117-137 (WGDFPMTGLVAMAASILTMLI). Residues 138–200 (ESFASGYLNR…DDDHIDMRKK (63 aa)) are Cytoplasmic-facing. The interval 156–183 (TLPVSTGGEEEHAHTGSAHTHASQGHSH) is disordered. A helical membrane pass occupies residues 201 to 221 (IVTQILELGIVVHSVIIGISL). Residues 222-231 (GASPSVSTIK) are Extracellular-facing. The chain crosses the membrane as a helical span at residues 232-252 (PLIAAITFHQLFEGFGLGGCI). Topologically, residues 253–261 (SEAKFRVKK) are cytoplasmic. Residues 262-282 (IWVMLMFFALTAPIGIGIGIG) traverse the membrane as a helical segment. At 283-302 (VAEIYNENSPMALKVSGFLN) the chain is on the extracellular side. Residues 303–323 (ATASGILIYMALVDLVAPLFM) form a helical membrane-spanning segment. Topologically, residues 324-334 (NQKTQSSMKIQ) are cytoplasmic. A helical transmembrane segment spans residues 335–355 (VACSVSLVVGAGLMSLLAIWA).

The protein belongs to the ZIP transporter (TC 2.A.5) family.

The protein resides in the cell membrane. Its function is as follows. Zinc transporter involved in zinc uptake in roots. Targeted by BZIP23 transcription factor in response to zinc-deficient conditions. The chain is Probable zinc transporter 12 (ZIP12) from Arabidopsis thaliana (Mouse-ear cress).